The primary structure comprises 447 residues: ATP-dependent protease ATPase subunit HslU (447 aa).

Residues isoleucine 18, 60–65 (GVGKTE), aspartate 259, glutamate 325, and arginine 397 contribute to the ATP site.

The protein belongs to the ClpX chaperone family. HslU subfamily. In terms of assembly, a double ring-shaped homohexamer of HslV is capped on each side by a ring-shaped HslU homohexamer. The assembly of the HslU/HslV complex is dependent on binding of ATP.

It is found in the cytoplasm. Its function is as follows. ATPase subunit of a proteasome-like degradation complex; this subunit has chaperone activity. The binding of ATP and its subsequent hydrolysis by HslU are essential for unfolding of protein substrates subsequently hydrolyzed by HslV. HslU recognizes the N-terminal part of its protein substrates and unfolds these before they are guided to HslV for hydrolysis. The protein is ATP-dependent protease ATPase subunit HslU of Burkholderia thailandensis (strain ATCC 700388 / DSM 13276 / CCUG 48851 / CIP 106301 / E264).